Reading from the N-terminus, the 350-residue chain is C5a anaphylatoxin chemotactic receptor 1 (350 aa).

Residues 1-37 (MDSFNYTTPDYGHYDDKDTLDPNTPVDKTSNTLRVPD) lie on the Extracellular side of the membrane. Positions 10–18 (DYGHYDDKD) are required for CHIPS binding. 2 positions are modified to sulfotyrosine: tyrosine 11 and tyrosine 14. An involved in C5a binding region spans residues 21–30 (DPNTPVDKTS). The chain crosses the membrane as a helical span at residues 38–64 (ILALVIFAVVFLVGVLGNALVVWVTAF). Over 65–69 (EVKRT) the chain is Cytoplasmic. The helical transmembrane segment at 70-93 (INAIWFLNLAVADFLSCLALPILF) threads the bilayer. Over 94–110 (TSIVQHHHWPFGGAACR) the chain is Extracellular. Cysteine 109 and cysteine 188 are joined by a disulfide. The helical transmembrane segment at 111 to 132 (ILPSLILLNMYASILLLATISA) threads the bilayer. Residues 133-153 (DRFLLVFKPIWCQNFRGAGLA) lie on the Cytoplasmic side of the membrane. A helical membrane pass occupies residues 154–174 (WIACAVAWGLALLLTIPSFLY). The Extracellular segment spans residues 175 to 200 (RVVREEYFPPKVLCGVDYSHDKQRER). Residues 201-226 (AVAVVRLVLGFLWPLLTLTICYTFIL) traverse the membrane as a helical segment. Residues 227–242 (LRTWSRRATRSTKTLK) lie on the Cytoplasmic side of the membrane. A helical membrane pass occupies residues 243-265 (VVVAVVASFFIFWLPYQVTGIMM). The Extracellular segment spans residues 266–282 (SFLEPSSPTFLLLKKLD). Residues 283-303 (SLCVSFAYINCCINPIIYVVA) form a helical membrane-spanning segment. Residues 304–350 (GQGFQGRLRKSLPSLLRNVLTEESVVRESKSFTRSTVDTMAEKTQAV) lie on the Cytoplasmic side of the membrane. Residues serine 314, serine 317, serine 327, serine 332, serine 334, and serine 338 each carry the phosphoserine modification.

This sequence belongs to the G-protein coupled receptor 1 family. Homodimer. May also form higher-order oligomers. Interacts (when phosphorylated) with ARRB1 and ARRB2; the interaction is associated with internalization of C5aR. Interacts (via N-terminal domain) with S.aureus chemotaxis inhibitory protein (CHIPS); the interaction blocks the receptor and may thus inhibit the immune response. Sulfation plays a critical role in the association of C5aR with C5a, but no significant role in the ability of the receptor to transduce a signal and mobilize calcium in response to a small peptide agonist. Sulfation at Tyr-14 is important for CHIPS binding. In terms of processing, phosphorylated on serine residues in response to C5a binding, resulting in internalization of the receptor and short-term desensitization to C5a.

Its subcellular location is the cell membrane. It localises to the cytoplasmic vesicle. Functionally, receptor for the chemotactic and inflammatory peptide anaphylatoxin C5a. The ligand interacts with at least two sites on the receptor: a high-affinity site on the extracellular N-terminus, and a second site in the transmembrane region which activates downstream signaling events. Receptor activation stimulates chemotaxis, granule enzyme release, intracellular calcium release and superoxide anion production. This Gorilla gorilla gorilla (Western lowland gorilla) protein is C5a anaphylatoxin chemotactic receptor 1 (C5AR1).